The primary structure comprises 1071 residues: ATP-dependent helicase/deoxyribonuclease subunit B (1071 aa).

Belongs to the helicase family. AddB/RexB type 2 subfamily. Heterodimer of AddA and RexB. It depends on Mg(2+) as a cofactor.

The heterodimer acts as both an ATP-dependent DNA helicase and an ATP-dependent, dual-direction single-stranded exonuclease. Recognizes the chi site generating a DNA molecule suitable for the initiation of homologous recombination. This subunit has 5' -&gt; 3' nuclease activity but not helicase activity. The chain is ATP-dependent helicase/deoxyribonuclease subunit B from Streptococcus pyogenes serotype M4 (strain MGAS10750).